The following is a 573-amino-acid chain: Protein FAM200A (573 aa).

The disordered stretch occupies residues methionine 1–serine 51. Over methionine 1 to serine 513 the chain is Extracellular. A helical transmembrane segment spans residues isoleucine 514 to leucine 533. Over threonine 534–histidine 573 the chain is Cytoplasmic.

This sequence belongs to the FAM200 family.

It is found in the membrane. The protein is Protein FAM200A (FAM200A) of Macaca fascicularis (Crab-eating macaque).